We begin with the raw amino-acid sequence, 323 residues long: DNA repair and recombination protein RadA (323 aa).

ATP is bound at residue 114 to 121 (GEFGSGKT).

This sequence belongs to the eukaryotic RecA-like protein family.

In terms of biological role, involved in DNA repair and in homologous recombination. Binds and assemble on single-stranded DNA to form a nucleoprotein filament. Hydrolyzes ATP in a ssDNA-dependent manner and promotes DNA strand exchange between homologous DNA molecules. The polypeptide is DNA repair and recombination protein RadA (Picrophilus torridus (strain ATCC 700027 / DSM 9790 / JCM 10055 / NBRC 100828 / KAW 2/3)).